The sequence spans 544 residues: Glucose-6-phosphate isomerase (544 aa).

The active-site Proton donor is Glu354. Residues His385 and Lys510 contribute to the active site.

This sequence belongs to the GPI family.

The protein resides in the cytoplasm. The catalysed reaction is alpha-D-glucose 6-phosphate = beta-D-fructose 6-phosphate. The protein operates within carbohydrate biosynthesis; gluconeogenesis. Its pathway is carbohydrate degradation; glycolysis; D-glyceraldehyde 3-phosphate and glycerone phosphate from D-glucose: step 2/4. In terms of biological role, catalyzes the reversible isomerization of glucose-6-phosphate to fructose-6-phosphate. The chain is Glucose-6-phosphate isomerase from Deinococcus deserti (strain DSM 17065 / CIP 109153 / LMG 22923 / VCD115).